Reading from the N-terminus, the 713-residue chain is Oligopeptidase PhomG (713 aa).

Histidine 461 contacts Zn(2+). The active site involves glutamate 462. Zn(2+) is bound by residues histidine 465 and histidine 468.

The protein belongs to the peptidase M3 family. In terms of assembly, monomer. Requires Zn(2+) as cofactor.

It functions in the pathway mycotoxin biosynthesis. In terms of biological role, oligopeptidase; part of the gene cluster that mediates the biosynthesis of the phomopsins, a group of hexapeptide mycotoxins which infects lupins and causes lupinosis disease in livestock. Within the pathway, phomG and phomG' are probably involved in the processing of the phomA and phomA' precursors. The pathway starts with the processing of the precursor phomA by several endopeptidases including kexin proteases as well as the cluster-specific S41 family peptidase phomP1 and the oligopeptidase phomG to produce 10 identical copies of the hexapeptide Tyr-Val-Ile-Pro-Ile-Asp. After being excised from the precursor peptide, the core peptides are cyclized and modified post-translationally by enzymes encoded within the gene cluster. The timing and order of proteolysis of the phomA precursor and PTMs are still unknown. Two tyrosinase-like enzymes, phomQ1 and phomQ2, catalyze the chlorination and hydroxylation of Tyr, respectively. PhomYb, is proposed to be involved in the construction of the macrocyclic structure. The other 4 ustYa family proteins may be involved in PTMs that generate the unique structure of phomopsin A. PhomYa is required for the hydroxylation of C-beta of Tyr. PhomYc, phomYd, and phomYe are responsible for the biosynthesis of 2,3-dehydroisoleucine (dIle), 2,3-dehydroaspartic acid (dAsp), and 3,4-dehydroproline (dPro), respectively. While dIle formation by phomYc is indispensable for the installation of dAsp by phomYd, the order of the other PTMs have not been elucidated yet. Most of the biosynthetic enzymes likely have broad substrate specificity, and thus, there might be a metabolic grid from a precursor to phomopsin A. The enzyme(s) responsible for the biosynthesis of 3,4-dehydrovaline (dVal) have also not been identified yet. Finally, phomM acts as an S-adenosylmethionine-dependent alpha-N-methyltransferase that catalyzes two successive N-methylation reactions, converting N-desmethyl-phomopsin A to phomopsin A and phomopsin A further to an N,N-dimethylated congener called phomopsin E. The sequence is that of Oligopeptidase PhomG from Diaporthe leptostromiformis (Lupinosis disease fungus).